We begin with the raw amino-acid sequence, 364 residues long: MAQQTPLYEQHTLCGARMVDFHGWMMPLHYGSQLDEHHAVRTDAGMFDVSHMTIVDLHGSRTREFLRYLLANDVAKLTKTGKALYSGMLNASGGVIDDLIIYYFTEDFFRLVVNSATREKDLSWITQHAEPYAIDITVRDDLSLIAVQGPNAQEKAATLFTDEQRHAVEGMKPFFGVQVGDLFIATTGYTGEAGYEIAMPNEKAADFWRALVEAGVKPCGLGARDTLRLEAGMNLYGQEMDEGISPLAANMGWTIAWEPADRDFIGREALEMQREKGHEQLVGLVMTEKGVLRNELPVRFTDAQGNQQEGIITSGTFSPTLGYSIALARVPAGIGETAIVQIRNREMPVKVTKPVFVRNGKAVA.

The protein belongs to the GcvT family. As to quaternary structure, the glycine cleavage system is composed of four proteins: P, T, L and H.

It carries out the reaction N(6)-[(R)-S(8)-aminomethyldihydrolipoyl]-L-lysyl-[protein] + (6S)-5,6,7,8-tetrahydrofolate = N(6)-[(R)-dihydrolipoyl]-L-lysyl-[protein] + (6R)-5,10-methylene-5,6,7,8-tetrahydrofolate + NH4(+). Its function is as follows. The glycine cleavage system catalyzes the degradation of glycine. The chain is Aminomethyltransferase from Salmonella enteritidis PT4 (strain P125109).